The following is a 74-amino-acid chain: Chitinases 70, 30, and 20.5 kDa (74 aa).

Positions residue 1 to threonine 27 are N-terminus of 70 kDa chitinase. Positions alanine 28 to aspartate 52 are N-terminus of 30 kDa chitinase. The segment at residue 53–cysteine 74 is N-terminus of 20.5 kDa chitinase.

This sequence belongs to the glycosyl hydrolase 18 family. Chitinase class II subfamily. As to quaternary structure, homodimer, but homotrimers and homotetramers could be observed for the 20.5 and 30 kDa chitinases. Post-translationally, the 70 kDa chitinase is probably the precursor protein of the 30 and 20.5 kDa chitinases.

The catalysed reaction is Random endo-hydrolysis of N-acetyl-beta-D-glucosaminide (1-&gt;4)-beta-linkages in chitin and chitodextrins.. Able to cleave chitin oligomers from N=3 to 6. This is Chitinases 70, 30, and 20.5 kDa from Streptomyces olivaceoviridis (Streptomyces corchorusii).